Reading from the N-terminus, the 183-residue chain is Adenine phosphoribosyltransferase (183 aa).

This sequence belongs to the purine/pyrimidine phosphoribosyltransferase family. As to quaternary structure, homodimer.

The protein resides in the cytoplasm. The enzyme catalyses AMP + diphosphate = 5-phospho-alpha-D-ribose 1-diphosphate + adenine. Its pathway is purine metabolism; AMP biosynthesis via salvage pathway; AMP from adenine: step 1/1. Catalyzes a salvage reaction resulting in the formation of AMP, that is energically less costly than de novo synthesis. The sequence is that of Adenine phosphoribosyltransferase from Photorhabdus laumondii subsp. laumondii (strain DSM 15139 / CIP 105565 / TT01) (Photorhabdus luminescens subsp. laumondii).